The primary structure comprises 120 residues: U13-barytoxin-Tl1a (120 aa).

An N-terminal signal peptide occupies residues methionine 1–alanine 20. Disulfide bonds link cysteine 75/cysteine 90, cysteine 82/cysteine 95, and cysteine 89/cysteine 109.

This sequence belongs to the neurotoxin 14 (magi-1) family. 05 (ICK-7) subfamily. ICK-7 sub-subfamily. Expressed by the venom gland.

Its subcellular location is the secreted. Its function is as follows. Ion channel inhibitor. In Trittame loki (Brush-footed trapdoor spider), this protein is U13-barytoxin-Tl1a.